We begin with the raw amino-acid sequence, 556 residues long: ATP synthase subunit beta-2, mitochondrial (556 aa).

Residues 1–20 are compositionally biased toward low complexity; the sequence is MASRRVLSSLLRSSSGRSAA. Residues 1 to 37 form a disordered region; the sequence is MASRRVLSSLLRSSSGRSAAKLVNRNPRLPSPSPARH. Residues 1–51 constitute a mitochondrion transit peptide; that stretch reads MASRRVLSSLLRSSSGRSAAKLVNRNPRLPSPSPARHAAPCSYLLGRVAEY. Ser59 is subject to Phosphoserine. Residue 231-238 participates in ATP binding; it reads GGAGVGKT.

Belongs to the ATPase alpha/beta chains family. As to quaternary structure, F-type ATPases have 2 components, CF(1) - the catalytic core - and CF(0) - the membrane proton channel. CF(1) has five subunits: alpha(3), beta(3), gamma(1), delta(1), epsilon(1). CF(0) has three main subunits: a, b and c.

It is found in the mitochondrion. The protein resides in the mitochondrion inner membrane. It carries out the reaction ATP + H2O + 4 H(+)(in) = ADP + phosphate + 5 H(+)(out). Its function is as follows. Mitochondrial membrane ATP synthase (F(1)F(0) ATP synthase or Complex V) produces ATP from ADP in the presence of a proton gradient across the membrane which is generated by electron transport complexes of the respiratory chain. F-type ATPases consist of two structural domains, F(1) - containing the extramembraneous catalytic core, and F(0) - containing the membrane proton channel, linked together by a central stalk and a peripheral stalk. During catalysis, ATP synthesis in the catalytic domain of F(1) is coupled via a rotary mechanism of the central stalk subunits to proton translocation. Subunits alpha and beta form the catalytic core in F(1). Rotation of the central stalk against the surrounding alpha(3)beta(3) subunits leads to hydrolysis of ATP in three separate catalytic sites on the beta subunits. The sequence is that of ATP synthase subunit beta-2, mitochondrial from Arabidopsis thaliana (Mouse-ear cress).